Here is a 534-residue protein sequence, read N- to C-terminus: CTP synthase (534 aa).

The interval 1-269 (MHVSNSKFIF…DKIIIDAFRL (269 aa)) is amidoligase domain. Ser17 serves as a coordination point for CTP. Residue Ser17 participates in UTP binding. 18-23 (SLGKGV) lines the ATP pocket. Tyr58 contributes to the L-glutamine binding site. Asp75 lines the ATP pocket. Residues Asp75 and Glu143 each contribute to the Mg(2+) site. Residues 150 to 152 (DIE), 190 to 195 (KTKPTQ), and Lys226 contribute to the CTP site. Residues 190 to 195 (KTKPTQ) and Lys226 contribute to the UTP site. A Glutamine amidotransferase type-1 domain is found at 294-532 (DIAIVGKYIK…IENAYIYKKE (239 aa)). An L-glutamine-binding site is contributed by Gly352. The active-site Nucleophile; for glutamine hydrolysis is Cys379. Residues 380–383 (LGMQ), Glu403, and Arg460 contribute to the L-glutamine site. Active-site residues include His505 and Glu507.

Belongs to the CTP synthase family. In terms of assembly, homotetramer.

It carries out the reaction UTP + L-glutamine + ATP + H2O = CTP + L-glutamate + ADP + phosphate + 2 H(+). The enzyme catalyses L-glutamine + H2O = L-glutamate + NH4(+). The catalysed reaction is UTP + NH4(+) + ATP = CTP + ADP + phosphate + 2 H(+). It functions in the pathway pyrimidine metabolism; CTP biosynthesis via de novo pathway; CTP from UDP: step 2/2. With respect to regulation, allosterically activated by GTP, when glutamine is the substrate; GTP has no effect on the reaction when ammonia is the substrate. The allosteric effector GTP functions by stabilizing the protein conformation that binds the tetrahedral intermediate(s) formed during glutamine hydrolysis. Inhibited by the product CTP, via allosteric rather than competitive inhibition. Its function is as follows. Catalyzes the ATP-dependent amination of UTP to CTP with either L-glutamine or ammonia as the source of nitrogen. Regulates intracellular CTP levels through interactions with the four ribonucleotide triphosphates. In Hydrogenobaculum sp. (strain Y04AAS1), this protein is CTP synthase.